The chain runs to 297 residues: Glycerol-3-phosphate dehydrogenase [NAD(P)+] (297 aa).

3 residues coordinate NADPH: Trp-11, Arg-30, and Lys-79. Sn-glycerol 3-phosphate is bound by residues Lys-79, Gly-107, and Ser-109. Ala-111 serves as a coordination point for NADPH. Sn-glycerol 3-phosphate is bound by residues Lys-161, Asp-214, Ser-224, Arg-225, and Asn-226. Lys-161 serves as the catalytic Proton acceptor. Position 225 (Arg-225) interacts with NADPH. Val-249 and Glu-251 together coordinate NADPH.

The protein belongs to the NAD-dependent glycerol-3-phosphate dehydrogenase family.

Its subcellular location is the cytoplasm. The enzyme catalyses sn-glycerol 3-phosphate + NAD(+) = dihydroxyacetone phosphate + NADH + H(+). The catalysed reaction is sn-glycerol 3-phosphate + NADP(+) = dihydroxyacetone phosphate + NADPH + H(+). The protein operates within membrane lipid metabolism; glycerophospholipid metabolism. Catalyzes the reduction of the glycolytic intermediate dihydroxyacetone phosphate (DHAP) to sn-glycerol 3-phosphate (G3P), the key precursor for phospholipid synthesis. This is Glycerol-3-phosphate dehydrogenase [NAD(P)+] from Wolinella succinogenes (strain ATCC 29543 / DSM 1740 / CCUG 13145 / JCM 31913 / LMG 7466 / NCTC 11488 / FDC 602W) (Vibrio succinogenes).